The following is a 360-amino-acid chain: Aminomethyltransferase (360 aa).

Belongs to the GcvT family. The glycine cleavage system is composed of four proteins: P, T, L and H.

It carries out the reaction N(6)-[(R)-S(8)-aminomethyldihydrolipoyl]-L-lysyl-[protein] + (6S)-5,6,7,8-tetrahydrofolate = N(6)-[(R)-dihydrolipoyl]-L-lysyl-[protein] + (6R)-5,10-methylene-5,6,7,8-tetrahydrofolate + NH4(+). The glycine cleavage system catalyzes the degradation of glycine. The chain is Aminomethyltransferase from Pseudoalteromonas translucida (strain TAC 125).